We begin with the raw amino-acid sequence, 206 residues long: Urease accessory protein UreG (206 aa).

11–18 (GPVGAGKT) provides a ligand contact to GTP.

It belongs to the SIMIBI class G3E GTPase family. UreG subfamily. As to quaternary structure, homodimer. UreD, UreF and UreG form a complex that acts as a GTP-hydrolysis-dependent molecular chaperone, activating the urease apoprotein by helping to assemble the nickel containing metallocenter of UreC. The UreE protein probably delivers the nickel.

Its subcellular location is the cytoplasm. In terms of biological role, facilitates the functional incorporation of the urease nickel metallocenter. This process requires GTP hydrolysis, probably effectuated by UreG. In Ureaplasma parvum serovar 3 (strain ATCC 700970), this protein is Urease accessory protein UreG.